A 266-amino-acid polypeptide reads, in one-letter code: BTB/POZ domain-containing protein KCTD2 (266 aa).

An N-acetylalanine modification is found at A2. Residues 38-79 (GRHPADTAASPPPPRTAGARARTSGADGRRRGRPLGPAQRGR) form a disordered region. Low complexity predominate over residues 53-63 (TAGARARTSGA). The region spanning 76–174 (QRGRYLLRDT…LVKERIRDNE (99 aa)) is the BTB domain.

The chain is BTB/POZ domain-containing protein KCTD2 (Kctd2) from Mus musculus (Mouse).